A 146-amino-acid chain; its full sequence is Large ribosomal subunit protein uL15 (146 aa).

The tract at residues 1–52 is disordered; it reads MKLSNLSPKAGSKKRRRRVGRGIAAGQGASCGFGMRGQKSRSGTGTKAGFEG. Residues 11-20 show a composition bias toward basic residues; it reads GSKKRRRRVG. The segment covering 23–35 has biased composition (gly residues); the sequence is IAAGQGASCGFGM.

Belongs to the universal ribosomal protein uL15 family. As to quaternary structure, part of the 50S ribosomal subunit.

Binds to the 23S rRNA. The protein is Large ribosomal subunit protein uL15 of Picosynechococcus sp. (strain ATCC 27264 / PCC 7002 / PR-6) (Agmenellum quadruplicatum).